The chain runs to 101 residues: Small ribosomal subunit protein uS14 (101 aa).

Belongs to the universal ribosomal protein uS14 family. Part of the 30S ribosomal subunit. Contacts proteins S3 and S10.

Binds 16S rRNA, required for the assembly of 30S particles and may also be responsible for determining the conformation of the 16S rRNA at the A site. The chain is Small ribosomal subunit protein uS14 from Methylorubrum extorquens (strain PA1) (Methylobacterium extorquens).